The primary structure comprises 107 residues: U1-lycotoxin-Ls1l (107 aa).

The first 20 residues, 1-20, serve as a signal peptide directing secretion; it reads MMKVLVVVALLVTLISYSSS. The propeptide occupies 21–41; that stretch reads EGIDDLEADELLSLMANEQTR. 4 disulfides stabilise this stretch: cysteine 44-cysteine 59, cysteine 51-cysteine 68, cysteine 58-cysteine 86, and cysteine 70-cysteine 84.

It belongs to the neurotoxin 19 (CSTX) family. 04 (U1-Lctx) subfamily. Expressed by the venom gland.

It localises to the secreted. The protein is U1-lycotoxin-Ls1l of Lycosa singoriensis (Wolf spider).